The primary structure comprises 126 residues: Fluoride-specific ion channel FluC (126 aa).

4 consecutive transmembrane segments (helical) span residues 4–24 (LLLV…TSAW), 36–56 (GTLL…TASL), 67–85 (LFLA…SFNY), and 101–121 (AYLL…TLLV). Residues glycine 75 and threonine 78 each coordinate Na(+).

This sequence belongs to the fluoride channel Fluc/FEX (TC 1.A.43) family.

It localises to the cell inner membrane. It carries out the reaction fluoride(in) = fluoride(out). Na(+) is not transported, but it plays an essential structural role and its presence is essential for fluoride channel function. Fluoride-specific ion channel. Important for reducing fluoride concentration in the cell, thus reducing its toxicity. This is Fluoride-specific ion channel FluC from Anaeromyxobacter sp. (strain K).